A 118-amino-acid polypeptide reads, in one-letter code: Large ribosomal subunit protein uL18 (118 aa).

The protein belongs to the universal ribosomal protein uL18 family. In terms of assembly, part of the 50S ribosomal subunit; part of the 5S rRNA/L5/L18/L25 subcomplex. Contacts the 5S and 23S rRNAs.

In terms of biological role, this is one of the proteins that bind and probably mediate the attachment of the 5S RNA into the large ribosomal subunit, where it forms part of the central protuberance. The polypeptide is Large ribosomal subunit protein uL18 (Ralstonia pickettii (strain 12J)).